The sequence spans 1045 residues: Collagen alpha-1(VI) chain (1045 aa).

A signal peptide spans 1-24 (MKMLQGRLPLTVLHLFLLLGGGMT). The 191-residue stretch at 65 to 255 (DIFFVLDTSE…LTDDEIDNTI (191 aa)) folds into the VWFA 1 domain. The tract at residues 277-613 (PSRGLSGPSG…GPPGPGGPPG (337 aa)) is disordered. Residues 280 to 540 (GLSGPSGPPG…RGDDGRPGNG (261 aa)) are triple-helical region. Residues 297 to 309 (PGLPGDRGLPGDP) show a composition bias toward low complexity. Residues 327-360 (QGIRGEKGGRGAKGSKGDKGKRGIDGVDGQKGED) are compositionally biased toward basic and acidic residues. Low complexity predominate over residues 375–392 (DGAPGSSGPKGDPGPYGT). The span at 400 to 409 (GTPGTGGRPG) shows a compositional bias: gly residues. 2 consecutive short sequence motifs (cell attachment site) follow at residues 501–503 (RGD) and 554–556 (RGD). Residues 600-613 (EGPPGPPGPGGPPG) show a composition bias toward pro residues. 2 VWFA domains span residues 638-825 (DLLF…LHNV) and 849-1035 (DITM…YQSI).

It belongs to the type VI collagen family.

It is found in the secreted. It localises to the extracellular space. Its subcellular location is the extracellular matrix. In terms of biological role, collagen VI acts as a cell-binding protein. In Xenopus laevis (African clawed frog), this protein is Collagen alpha-1(VI) chain (col6a1).